A 451-amino-acid chain; its full sequence is Exodeoxyribonuclease 7 large subunit (451 aa).

Belongs to the XseA family. As to quaternary structure, heterooligomer composed of large and small subunits.

It is found in the cytoplasm. The enzyme catalyses Exonucleolytic cleavage in either 5'- to 3'- or 3'- to 5'-direction to yield nucleoside 5'-phosphates.. Bidirectionally degrades single-stranded DNA into large acid-insoluble oligonucleotides, which are then degraded further into small acid-soluble oligonucleotides. This chain is Exodeoxyribonuclease 7 large subunit, found in Bacillus cytotoxicus (strain DSM 22905 / CIP 110041 / 391-98 / NVH 391-98).